The primary structure comprises 289 residues: Thymidylate synthase (289 aa).

Residues Arg21 and 150-151 (RR) each bind dUMP. Cys170 (nucleophile) is an active-site residue. Residues 191–194 (RSAD), Asn202, and 232–234 (HIY) contribute to the dUMP site. Residue Asp194 coordinates (6R)-5,10-methylene-5,6,7,8-tetrahydrofolate. A (6R)-5,10-methylene-5,6,7,8-tetrahydrofolate-binding site is contributed by Ala288.

Belongs to the thymidylate synthase family. Bacterial-type ThyA subfamily. As to quaternary structure, homodimer.

The protein resides in the cytoplasm. The enzyme catalyses dUMP + (6R)-5,10-methylene-5,6,7,8-tetrahydrofolate = 7,8-dihydrofolate + dTMP. It functions in the pathway pyrimidine metabolism; dTTP biosynthesis. Its function is as follows. Catalyzes the reductive methylation of 2'-deoxyuridine-5'-monophosphate (dUMP) to 2'-deoxythymidine-5'-monophosphate (dTMP) while utilizing 5,10-methylenetetrahydrofolate (mTHF) as the methyl donor and reductant in the reaction, yielding dihydrofolate (DHF) as a by-product. This enzymatic reaction provides an intracellular de novo source of dTMP, an essential precursor for DNA biosynthesis. The sequence is that of Thymidylate synthase from Malacoplasma penetrans (strain HF-2) (Mycoplasma penetrans).